We begin with the raw amino-acid sequence, 158 residues long: Flagellar assembly factor FliW (158 aa).

This sequence belongs to the FliW family. In terms of assembly, interacts with translational regulator CsrA and flagellin(s).

It localises to the cytoplasm. Acts as an anti-CsrA protein, binds CsrA and prevents it from repressing translation of its target genes, one of which is flagellin. Binds to flagellin and participates in the assembly of the flagellum. In Syntrophus aciditrophicus (strain SB), this protein is Flagellar assembly factor FliW.